A 254-amino-acid chain; its full sequence is Winged helix repair factor 1 (254 aa).

Residues 4 to 21 carry the Bipartite nuclear localization signal motif; the sequence is KRRLLASEAFGVKRRRAP. 3 winged helix domain regions span residues 32–104, 120–179, and 180–254; these read RAGS…GIVF, PCAG…LAVP, and GAGR…LPDT.

This sequence belongs to the STK19 family. Monomer in solution. Homodimer; when bound to DNA. Component of a transcription-coupled nucleotide excision repair (TC-NER) complex composed of STK19, ERCC6, ERCC8, DDA1, DDB1, ELOF1 and UVSSA which assembles and interacts with the multiprotein RNA polymerase II complex when it stalls at DNA lesions.

It localises to the nucleus. Its function is as follows. DNA-binding protein which is required for efficient transcription-coupled nucleotide excision repair (TC-NER). Acts as part of a TC-NER complex which assembles and interacts with RNA polymerase II (RNAPII) when it stalls at DNA lesions. TC-NER complex subunit UVSSA binds to the GTF2H1/p62 subunit of the TFIIH transcription factor complex, tethering TFIIH to the TC-NER complex. WHR1/STK19 then interacts with the XPD helicase subunit of TFIIH which guides TFIIH to DNA downstream of the stalled RNAPII, ensuring DNA repair. Directly interacts with RNAPII and also binds to downstream DNA. Promotes the timely removal of DNA damage-stalled RNAPII, allowing downstream NER factors to access DNA lesions. Required for monoubiquitination of UVSSA. Regulates repositioning and stabilization of UVSSA within the TC-NER complex. Stimulates ubiquitination of RNAPII complex member RBP1. Also binds to RNA and regulates the expression levels of many mRNAs. In Mus musculus (Mouse), this protein is Winged helix repair factor 1.